Here is a 62-residue protein sequence, read N- to C-terminus: Beta-defensin 33 (62 aa).

The signal sequence occupies residues 1–20; that stretch reads MRLLFLLFLLLVCLAQKTSG. Disulfide bonds link Cys30–Cys59, Cys37–Cys52, and Cys45–Cys60.

Belongs to the beta-defensin family.

The protein localises to the secreted. Its function is as follows. Has antibacterial activity. This is Beta-defensin 33 (Defb33) from Rattus norvegicus (Rat).